A 297-amino-acid chain; its full sequence is 4-hydroxy-tetrahydrodipicolinate synthase (297 aa).

T50 is a binding site for pyruvate. Residue Y139 is the Proton donor/acceptor of the active site. The active-site Schiff-base intermediate with substrate is the K167. Residue V209 participates in pyruvate binding.

This sequence belongs to the DapA family. Homotetramer; dimer of dimers.

Its subcellular location is the cytoplasm. The enzyme catalyses L-aspartate 4-semialdehyde + pyruvate = (2S,4S)-4-hydroxy-2,3,4,5-tetrahydrodipicolinate + H2O + H(+). It functions in the pathway amino-acid biosynthesis; L-lysine biosynthesis via DAP pathway; (S)-tetrahydrodipicolinate from L-aspartate: step 3/4. Its function is as follows. Catalyzes the condensation of (S)-aspartate-beta-semialdehyde [(S)-ASA] and pyruvate to 4-hydroxy-tetrahydrodipicolinate (HTPA). The protein is 4-hydroxy-tetrahydrodipicolinate synthase of Microcystis aeruginosa (strain NIES-843 / IAM M-2473).